The sequence spans 432 residues: Enolase (432 aa).

Gln167 contributes to the (2R)-2-phosphoglycerate binding site. Glu209 acts as the Proton donor in catalysis. Mg(2+) contacts are provided by Asp246, Glu290, and Asp317. Positions 342, 371, 372, and 393 each coordinate (2R)-2-phosphoglycerate. The active-site Proton acceptor is Lys342.

Belongs to the enolase family. Component of the RNA degradosome, a multiprotein complex involved in RNA processing and mRNA degradation. Mg(2+) is required as a cofactor.

The protein resides in the cytoplasm. It localises to the secreted. Its subcellular location is the cell surface. It carries out the reaction (2R)-2-phosphoglycerate = phosphoenolpyruvate + H2O. It participates in carbohydrate degradation; glycolysis; pyruvate from D-glyceraldehyde 3-phosphate: step 4/5. In terms of biological role, catalyzes the reversible conversion of 2-phosphoglycerate (2-PG) into phosphoenolpyruvate (PEP). It is essential for the degradation of carbohydrates via glycolysis. The sequence is that of Enolase from Salmonella dublin (strain CT_02021853).